The sequence spans 331 residues: MLIAQRPTLTEESISEFRSRFVIEPLEPGFGYTLGNSLRRTLLSSIPGAAVTSIRIDGVLHEFSTVPGVKEDVTEIILNIKGLVVSSEHDEPITAYLRKQGAGQVTAADISAPAGVEIHNPELVIATLNEKAKFELELTIERGRGYVSATQNRSEFSEAGQIPVDSIYSPVLKVTYRVEATRAGERTDFDRLVVDVETKSAITPRDAIASAGRTLTELFGLARELNSAAEGIEIGPAPVDAVLSSELSMPIEDLDLSVRSYNCLKREGINNVSELVALSETQLMNIRNFGQKSVDEVKDKLVELGLSLKDAVPGFDGAHYYSYDEDETTTN.

Residues 1–226 (MLIAQRPTLT…ELFGLARELN (226 aa)) are alpha N-terminal domain (alpha-NTD). The tract at residues 243 to 331 (LSSELSMPIE…SYDEDETTTN (89 aa)) is alpha C-terminal domain (alpha-CTD).

It belongs to the RNA polymerase alpha chain family. Homodimer. The RNAP catalytic core consists of 2 alpha, 1 beta, 1 beta' and 1 omega subunit. When a sigma factor is associated with the core the holoenzyme is formed, which can initiate transcription.

It catalyses the reaction RNA(n) + a ribonucleoside 5'-triphosphate = RNA(n+1) + diphosphate. DNA-dependent RNA polymerase catalyzes the transcription of DNA into RNA using the four ribonucleoside triphosphates as substrates. This chain is DNA-directed RNA polymerase subunit alpha, found in Clavibacter michiganensis subsp. michiganensis (strain NCPPB 382).